A 186-amino-acid polypeptide reads, in one-letter code: dCTP deaminase, dUMP-forming (186 aa).

DCTP-binding positions include 99 to 104 (KSSIAR), Asp-117, 125 to 127 (TLE), Gln-146, Tyr-159, Lys-166, and Gln-170. The Proton donor/acceptor role is filled by Glu-127.

The protein belongs to the dCTP deaminase family. As to quaternary structure, homotrimer.

The catalysed reaction is dCTP + 2 H2O = dUMP + NH4(+) + diphosphate. It participates in pyrimidine metabolism; dUMP biosynthesis; dUMP from dCTP: step 1/1. Its function is as follows. Bifunctional enzyme that catalyzes both the deamination of dCTP to dUTP and the hydrolysis of dUTP to dUMP without releasing the toxic dUTP intermediate. The polypeptide is dCTP deaminase, dUMP-forming (Methanosphaerula palustris (strain ATCC BAA-1556 / DSM 19958 / E1-9c)).